Consider the following 674-residue polypeptide: DNA mismatch repair protein MutL (674 aa).

The protein belongs to the DNA mismatch repair MutL/HexB family.

Its function is as follows. This protein is involved in the repair of mismatches in DNA. It is required for dam-dependent methyl-directed DNA mismatch repair. May act as a 'molecular matchmaker', a protein that promotes the formation of a stable complex between two or more DNA-binding proteins in an ATP-dependent manner without itself being part of a final effector complex. The polypeptide is DNA mismatch repair protein MutL (Clostridium perfringens (strain 13 / Type A)).